A 555-amino-acid chain; its full sequence is 2-isopropylmalate synthase (555 aa).

A Pyruvate carboxyltransferase domain is found at 30-303 (PIWCSVDLRD…DPGLDCTDIN (274 aa)). 4 residues coordinate Mg(2+): Asp-39, His-242, His-244, and Asn-278. The tract at residues 437–555 (QPDARIKFVD…VSAANRVIAK (119 aa)) is regulatory domain.

Belongs to the alpha-IPM synthase/homocitrate synthase family. LeuA type 2 subfamily. In terms of assembly, homodimer. The cofactor is Mg(2+).

It localises to the cytoplasm. It carries out the reaction 3-methyl-2-oxobutanoate + acetyl-CoA + H2O = (2S)-2-isopropylmalate + CoA + H(+). Its pathway is amino-acid biosynthesis; L-leucine biosynthesis; L-leucine from 3-methyl-2-oxobutanoate: step 1/4. In terms of biological role, catalyzes the condensation of the acetyl group of acetyl-CoA with 3-methyl-2-oxobutanoate (2-ketoisovalerate) to form 3-carboxy-3-hydroxy-4-methylpentanoate (2-isopropylmalate). The sequence is that of 2-isopropylmalate synthase from Brucella suis biovar 1 (strain 1330).